Here is a 482-residue protein sequence, read N- to C-terminus: MSDTKRDPADLLASLKIDNEKEDTSEVSTKETVKSQPEKTADSIKPAEKLVPKVEEKKTKQEDSNLISSEYEVKVKLADIQADPNSPLYSAKSFDELGLAPELLKGIYAMKFQKPSKIQERALPLLLHNPPRNMIAQSQSGTGKTAAFSLTMLTRVNPEDASPQAICLAPSRELARQTLEVVQEMGKFTKITSQLIVPDSFEKNKQINAQVIVGTPGTVLDLMRRKLMQLQKIKIFVLDEADNMLDQQGLGDQCIRVKRFLPKDTQLVLFSATFADAVRQYAKKIVPNANTLELQTNEVNVDAIKQLYMDCKNEADKFDVLTELYGLMTIGSSIIFVATKKTANVLYGKLKSEGHEVSILHGDLQTQERDRLIDDFREGRSKVLITTNVLARGIDIPTVSMVVNYDLPTLANGQADPATYIHRIGRTGRFGRKGVAISFVHDKNSFNILSAIQKYFGDIEMTRVPTDDWDEVEKIVKKVLKD.

The interval 1–62 (MSDTKRDPAD…KVEEKKTKQE (62 aa)) is disordered. The span at 17–62 (IDNEKEDTSEVSTKETVKSQPEKTADSIKPAEKLVPKVEEKKTKQE) shows a compositional bias: basic and acidic residues. A phosphoserine mark is found at Ser-86 and Ser-93. Residues 92–120 (KSFDELGLAPELLKGIYAMKFQKPSKIQE) carry the Q motif motif. The Helicase ATP-binding domain maps to 125-292 (LLLHNPPRNM…KKIVPNANTL (168 aa)). An ATP-binding site is contributed by 138–145 (SQSGTGKT). A Phosphoserine modification is found at Ser-162. The short motif at 239-242 (DEAD) is the DEAD box element. The 178-residue stretch at 303–480 (AIKQLYMDCK…EVEKIVKKVL (178 aa)) folds into the Helicase C-terminal domain.

This sequence belongs to the DEAD box helicase family. DDX19/DBP5 subfamily. In terms of assembly, associates with the nuclear pore complex. Interacts with NUP159, GLE1, GFD1 and ZDS1. The interaction with NUP159 is necessary for the association to the nuclear pore complex. Also interacts with the TFIIH complex subunits TFB1, TFB2 and RAD3.

Its subcellular location is the cytoplasm. It is found in the nucleus. It localises to the nuclear pore complex. The protein resides in the nucleus membrane. It carries out the reaction ATP + H2O = ADP + phosphate + H(+). Its function is as follows. ATP-dependent RNA helicase associated with the nuclear pore complex and essential for mRNA export from the nucleus. May participate in a terminal step of mRNA export through the removal of proteins that accompany mRNA through the nucleopore complex. May also be involved in early transcription. The polypeptide is ATP-dependent RNA helicase DBP5 (DBP5) (Saccharomyces cerevisiae (strain YJM789) (Baker's yeast)).